Reading from the N-terminus, the 3117-residue chain is Centrosome-associated protein 350 (3117 aa).

The tract at residues 1–24 (MRSSKSKEVPLPNPRNSQSKDTVQ) is disordered. The span at 14 to 24 (PRNSQSKDTVQ) shows a compositional bias: polar residues. Phosphoserine occurs at positions 86, 139, 142, and 218. 4 disordered regions span residues 249 to 275 (PKAL…ILKR), 436 to 514 (ILGP…NKQE), 548 to 625 (TVEL…TEQK), and 671 to 722 (LEEP…PPQP). Low complexity predominate over residues 255–267 (TDSSPSSTSTSNS). Residues 469 to 501 (GRAESDPRLDVLHRHLQRNSERSRSKSRSENNI) are compositionally biased toward basic and acidic residues. 2 positions are modified to phosphoserine: serine 473 and serine 507. Residues 563–573 (PRSHSPVKRKP) show a composition bias toward basic residues. Composition is skewed to basic and acidic residues over residues 591–625 (YDTD…TEQK) and 694–703 (ESDKENKVQE). Residues 598-645 (QYIVRQQEERKRKQNEEKKAQKEATEQKNKRLQELYRKQKEAFTKVKN) adopt a coiled-coil conformation. Phosphoserine is present on serine 695. Low complexity predominate over residues 705 to 718 (PPSASSSSDMSLSE). Residue threonine 878 is modified to Phosphothreonine. Serine 939 bears the Phosphoserine mark. Positions 981–992 (SVSEGPLLSEGS) are enriched in low complexity. The tract at residues 981–1002 (SVSEGPLLSEGSLSEEEGDQDG) is disordered. Serine 1061 carries the post-translational modification Phosphoserine. Residues 1081–1298 (EDKLDRGTST…GFKPNAPLTD (218 aa)) form a disordered region. Polar residues predominate over residues 1087–1102 (GTSTSRPLNATATPLS). The segment covering 1135–1144 (QEDHSNRKSA) has biased composition (basic and acidic residues). 2 stretches are compositionally biased toward low complexity: residues 1153 to 1172 (TSQH…STSS) and 1251 to 1267 (QKTP…KSLQ). A Phosphothreonine modification is found at threonine 1253. 2 positions are modified to phosphoserine: serine 1256 and serine 1259. Polar residues predominate over residues 1272–1283 (GTSSERSKSSVM). Positions 1369–1411 (IKAQQQRHERDLALLKLKAEQEALESQRQLEETRNKAAQVHAE) form a coiled coil. 2 disordered regions span residues 1494-1674 (TRTE…GGQD) and 1794-1854 (KLKS…SRMD). Positions 1503-1512 (PSVSLSQSKE) are enriched in polar residues. 2 stretches are compositionally biased toward low complexity: residues 1522–1535 (YSAS…SSGY) and 1543–1556 (SSGS…SVPS). The segment covering 1558 to 1571 (KENEKKLNGEKIES) has biased composition (basic and acidic residues). A Phosphoserine modification is found at serine 1613. Residues 1631–1647 (ESHRRFNMEKRRGHHDD) are compositionally biased toward basic and acidic residues. Serine 1648 and serine 1653 each carry phosphoserine. The stretch at 1707-1800 (KALKEKTKAE…LQEKLKSAGE (94 aa)) forms a coiled coil. Residues 1794–1815 (KLKSAGESKLDSHSDDDTKDNK) are compositionally biased toward basic and acidic residues. The residue at position 1818 (serine 1818) is a Phosphoserine. Over residues 1827–1841 (RSPSPISISSSETSS) the composition is skewed to low complexity. A coiled-coil region spans residues 1856–1899 (KFLTKREQKLMQRRQHAEELLEWKRRLDAEEAEIRQMEKQALAA). Basic and acidic residues predominate over residues 1903–1925 (ELIKPKTPKKELEDQRTEQKEIA). 4 disordered regions span residues 1903–2020 (ELIK…QCHL), 2107–2221 (ELSQ…ESGD), 2329–2356 (LKER…QKNT), and 2407–2432 (KDSQ…FGSN). The residue at position 1936 (serine 1936) is a Phosphoserine. Positions 1983–2005 (ELESSTSPSKHSLPKSCTSVSKQ) are enriched in polar residues. Positions 2051–2110 (EGRIRALKDELRKRKSVVNQLKKEQKKRQKERLKAQEASLIKQLESYDEFIKKTEAELSQ) form a coiled coil. A compositionally biased stretch (polar residues) spans 2111-2129 (DLETSPTAKPQIKTLSSAS). Phosphoserine is present on serine 2115. Residues 2141–2170 (HRSETAKNWKSLTESERSRGSLESIAEHVD) show a composition bias toward basic and acidic residues. Positions 2173–2184 (LSGSERSVSERS) are enriched in polar residues. Residues 2191–2201 (RVNEWDSRTED) show a composition bias toward basic and acidic residues. Threonine 2204 carries the post-translational modification Phosphothreonine. A Phosphoserine modification is found at serine 2206. Basic and acidic residues-rich tracts occupy residues 2329-2338 (LKERQSDQDM) and 2407-2417 (KDSQSCRDKPQ). Positions 2419 to 2432 (MRSSTSGATSFGSN) are enriched in polar residues. Serine 2431 and serine 2460 each carry phosphoserine. The span at 2465 to 2478 (MKSKERSDVEHEQQ) shows a compositional bias: basic and acidic residues. The segment at 2465–2485 (MKSKERSDVEHEQQVTESPSL) is disordered. A CAP-Gly domain is found at 2517–2559 (GETSFAKGFWAGVELDKPEGNNNGTYDGIAYFECKEKHGIFAP). The residue at position 2689 (threonine 2689) is a Phosphothreonine. The stretch at 2719–2752 (LLDLLTREKNQLEAQLKSSLNEEKKSKQQLEKIS) forms a coiled coil. A phosphoserine mark is found at serine 2830 and serine 2839.

As to quaternary structure, part of a ternary complex that contains CEP350, CEP43 and MAPRE1. Interacts (via C-terminus) directly with CEP43 (via N-terminus). Interacts with NR1H3, PPARA, PPARD and PPARG. Interacts directly with microtubules. Interacts with the fusion protein CEP43-FGFR1, and by doing so recruits and activates PI3K and PLC-gamma. Interacts with CYLD. Interacts with CFAP157. Interacts with CEP19 (via C-terminus). Interacts with CEP78; promoting CEP78 localization to centrosome and centriole. In terms of processing, phosphorylated during mitosis. In terms of tissue distribution, detected in heart, brain, skeletal muscle, testis, placenta, lung, liver, kidney and pancreas.

The protein localises to the cytoplasm. It localises to the cytoskeleton. It is found in the microtubule organizing center. The protein resides in the centrosome. Its subcellular location is the spindle. The protein localises to the nucleus. It localises to the centriole. It is found in the cilium basal body. In terms of biological role, plays an essential role in centriole growth by stabilizing a procentriolar seed composed of at least, SASS6 and CPAP. Required for anchoring microtubules to the centrosomes and for the integrity of the microtubule network. Recruits PPARA to discrete subcellular compartments and thereby modulates PPARA activity. Required for ciliation. The polypeptide is Centrosome-associated protein 350 (Homo sapiens (Human)).